We begin with the raw amino-acid sequence, 226 residues long: MPKYTDDDIFDDGAPQVAKGFDRGIDYLDIAAKLKKGLKKNYKVLQDTESTANAKRFAGSRVIYIIIALLQLKNCSRISEAIVATKKFSVSKNLNERVVVKIAKSEKDLIDRKTKDKIHTKPRYRDMVFPVDLVDTKIFKYIVKTKYWTKFCEFDSPRKRVLDFLLGHYECNTHSLRYAGINYLLNVEKRDMNVVAKFVGHANVNQLVLYTQTKALDEIFDRKIVV.

Active-site residues include Arg97, His174, and Arg177. Catalysis depends on Tyr210, which acts as the O-(3'-phospho-DNA)-tyrosine intermediate.

This sequence belongs to the 'phage' integrase family.

May catalyze site-specific integration of viral genome into host or helper virus DNA. This chain is Putative integrase V10, found in Acanthamoeba polyphaga (Amoeba).